The following is a 237-amino-acid chain: Phosphoribosylaminoimidazole-succinocarboxamide synthase (237 aa).

The protein belongs to the SAICAR synthetase family.

The enzyme catalyses 5-amino-1-(5-phospho-D-ribosyl)imidazole-4-carboxylate + L-aspartate + ATP = (2S)-2-[5-amino-1-(5-phospho-beta-D-ribosyl)imidazole-4-carboxamido]succinate + ADP + phosphate + 2 H(+). Its pathway is purine metabolism; IMP biosynthesis via de novo pathway; 5-amino-1-(5-phospho-D-ribosyl)imidazole-4-carboxamide from 5-amino-1-(5-phospho-D-ribosyl)imidazole-4-carboxylate: step 1/2. In Campylobacter fetus subsp. fetus (strain 82-40), this protein is Phosphoribosylaminoimidazole-succinocarboxamide synthase.